The following is a 72-amino-acid chain: Prokaryotic ubiquitin-like protein Pup (72 aa).

A compositionally biased stretch (gly residues) spans 1 to 10 (MATKDTGGGQ). A disordered region spans residues 1–45 (MATKDTGGGQQKATRSTEEVEEQAQDAQASEDLKERQEKLSDDVD). Positions 10–60 (QQKATRSTEEVEEQAQDAQASEDLKERQEKLSDDVDSVLDEIDDVLEENAE) form a coiled coil. Positions 28 to 66 (QASEDLKERQEKLSDDVDSVLDEIDDVLEENAEDFVRSF) are ARC ATPase binding. Residues 31–42 (EDLKERQEKLSD) show a composition bias toward basic and acidic residues. Residue E72 forms an Isoglutamyl lysine isopeptide (Glu-Lys) (interchain with K-? in acceptor proteins) linkage.

Belongs to the prokaryotic ubiquitin-like protein family. As to quaternary structure, strongly interacts with the proteasome-associated ATPase ARC through a hydrophobic interface; the interacting region of Pup lies in its C-terminal half. There is one Pup binding site per ARC hexamer ring.

It participates in protein degradation; proteasomal Pup-dependent pathway. Its function is as follows. Protein modifier that is covalently attached to lysine residues of substrate proteins, thereby targeting them for proteasomal degradation. The tagging system is termed pupylation. The polypeptide is Prokaryotic ubiquitin-like protein Pup (Streptomyces coelicolor (strain ATCC BAA-471 / A3(2) / M145)).